The following is a 23-amino-acid chain: Cytochrome c oxidase subunit 7A1, mitochondrial (23 aa).

It belongs to the cytochrome c oxidase VIIa family. As to quaternary structure, component of the complex IV (CIV, cytochrome c oxidase), a multisubunit enzyme composed of 14 subunits. The complex is composed of a catalytic core of 3 subunits MT-CO1, MT-CO2 and MT-CO3, encoded in the mitochondrial DNA, and 11 supernumerary subunits COX4I1 (or COX4I2), COX5A, COX5B, COX6A2 (or COX6A1), COX6B1 (or COX6B2), COX6C, COX7A1 (or COX7A2), COX7B, COX7C, COX8B and NDUFA4, which are encoded in the nuclear genome. The complex exists as a monomer or a dimer and forms supercomplexes (SCs) in the inner mitochondrial membrane with NADH-ubiquinone oxidoreductase (complex I, CI) and ubiquinol-cytochrome c oxidoreductase (cytochrome b-c1 complex, complex III, CIII), resulting in different assemblies (supercomplex SCI(1)III(2)IV(1) and megacomplex MCI(2)III(2)IV(2)).

The protein localises to the mitochondrion inner membrane. It participates in energy metabolism; oxidative phosphorylation. Functionally, component of the mitochondrial respiratory complex IV (CIV, also named cytochrome c oxidase complex), the last enzyme in the mitochondrial electron transport chain which drives oxidative phosphorylation. The CIV complex is the component of the respiratory chain that catalyzes the reduction of oxygen to water. Acts as an assembly factor that specifically drives the homodimerization of CIV complexes, mediating the formation of mitochondrial respiratory supercomplexes (respirasomes) containing two CIV: supercomplxes with two molecules of CIV show improved activity. Despite being highly expressed in brown adipose tissue, not required for thermogenesis. In Canis lupus familiaris (Dog), this protein is Cytochrome c oxidase subunit 7A1, mitochondrial (COX7A1).